The primary structure comprises 602 residues: Probable translation initiation factor IF-2 (602 aa).

The tr-type G domain maps to 18-233; the sequence is LRTPIVCVMG…LVGLAQRFLK (216 aa). The segment at 27 to 34 is G1; it reads GHVDHGKT. 27-34 contacts GTP; it reads GHVDHGKT. The G2 stretch occupies residues 52–56; that stretch reads AITQH. The interval 88–91 is G3; sequence DTPG. Residues 88–92 and 142–145 contribute to the GTP site; these read DTPGH and NKID. Positions 142 to 145 are G4; it reads NKID. The tract at residues 210–212 is G5; it reads SAI.

It belongs to the TRAFAC class translation factor GTPase superfamily. Classic translation factor GTPase family. IF-2 subfamily.

Its function is as follows. Function in general translation initiation by promoting the binding of the formylmethionine-tRNA to ribosomes. Seems to function along with eIF-2. The chain is Probable translation initiation factor IF-2 from Methanothrix thermoacetophila (strain DSM 6194 / JCM 14653 / NBRC 101360 / PT) (Methanosaeta thermophila).